A 39-amino-acid polypeptide reads, in one-letter code: Photosystem II reaction center protein J (39 aa).

Residues 9–29 (LWIIATFGGIAALTVVGLFIY) traverse the membrane as a helical segment.

It belongs to the PsbJ family. As to quaternary structure, PSII is composed of 1 copy each of membrane proteins PsbA, PsbB, PsbC, PsbD, PsbE, PsbF, PsbH, PsbI, PsbJ, PsbK, PsbL, PsbM, PsbT, PsbX, PsbY, PsbZ, Psb30/Ycf12, at least 3 peripheral proteins of the oxygen-evolving complex and a large number of cofactors. It forms dimeric complexes.

Its subcellular location is the plastid. The protein localises to the chloroplast thylakoid membrane. Functionally, one of the components of the core complex of photosystem II (PSII). PSII is a light-driven water:plastoquinone oxidoreductase that uses light energy to abstract electrons from H(2)O, generating O(2) and a proton gradient subsequently used for ATP formation. It consists of a core antenna complex that captures photons, and an electron transfer chain that converts photonic excitation into a charge separation. This Guillardia theta (Cryptophyte) protein is Photosystem II reaction center protein J.